A 156-amino-acid chain; its full sequence is Ribosomal RNA large subunit methyltransferase H (156 aa).

Residues L73, G104, and 123 to 128 (LSSLTL) each bind S-adenosyl-L-methionine.

Belongs to the RNA methyltransferase RlmH family. As to quaternary structure, homodimer.

The protein resides in the cytoplasm. The enzyme catalyses pseudouridine(1915) in 23S rRNA + S-adenosyl-L-methionine = N(3)-methylpseudouridine(1915) in 23S rRNA + S-adenosyl-L-homocysteine + H(+). In terms of biological role, specifically methylates the pseudouridine at position 1915 (m3Psi1915) in 23S rRNA. The sequence is that of Ribosomal RNA large subunit methyltransferase H from Neisseria meningitidis serogroup C / serotype 2a (strain ATCC 700532 / DSM 15464 / FAM18).